Consider the following 458-residue polypeptide: tRNA modification GTPase MnmE (458 aa).

The (6S)-5-formyl-5,6,7,8-tetrahydrofolate site is built by R22, E85, and R124. One can recognise a TrmE-type G domain in the interval 220–379 (GLATAIIGRP…LEEAISRLFF (160 aa)). N230 is a binding site for K(+). Residues 230 to 235 (NVGKSS), 249 to 255 (TDIPGTT), and 274 to 277 (DTAG) contribute to the GTP site. A Mg(2+)-binding site is contributed by S234. 3 residues coordinate K(+): T249, I251, and T254. T255 is a binding site for Mg(2+). K458 lines the (6S)-5-formyl-5,6,7,8-tetrahydrofolate pocket.

Belongs to the TRAFAC class TrmE-Era-EngA-EngB-Septin-like GTPase superfamily. TrmE GTPase family. Homodimer. Heterotetramer of two MnmE and two MnmG subunits. K(+) is required as a cofactor.

The protein localises to the cytoplasm. In terms of biological role, exhibits a very high intrinsic GTPase hydrolysis rate. Involved in the addition of a carboxymethylaminomethyl (cmnm) group at the wobble position (U34) of certain tRNAs, forming tRNA-cmnm(5)s(2)U34. This chain is tRNA modification GTPase MnmE, found in Shouchella clausii (strain KSM-K16) (Alkalihalobacillus clausii).